Reading from the N-terminus, the 323-residue chain is Leucine-rich repeat-containing protein 46 (323 aa).

LRR repeat units lie at residues 49 to 70 (DLET…ERLR), 71 to 92 (NIHS…ACIT), 93 to 114 (SLRF…LDLQ), and 115 to 135 (YLQF…DELP). An LRRCT domain is found at 146-188 (NPCTNQDGYRKMVIGALPLLLDLDKQPILERWTSDEEDKSSDE). The residue at position 178 (Thr178) is a Phosphothreonine. Ser179, Ser185, and Ser186 each carry phosphoserine. The stretch at 203 to 228 (RGFFKDLEQELHQHQERRQQAALTEH) forms a coiled coil. A disordered region spans residues 252 to 323 (DCSPAVTEEP…TKSTNKRGTK (72 aa)). Residues 269–290 (ATSSTQMASSSKKQVPRNQKGS) show a composition bias toward polar residues. The segment covering 297–310 (ALAATASKTSLAAA) has biased composition (low complexity). A Phosphoserine modification is found at Ser303.

It localises to the cell projection. The protein resides in the cilium. Its subcellular location is the flagellum. Required for normal spermatogenesis and male fertility. Plays an important role in sperm flagellum biogenesis. The protein is Leucine-rich repeat-containing protein 46 (Lrrc46) of Rattus norvegicus (Rat).